We begin with the raw amino-acid sequence, 453 residues long: Probable tRNA methyltransferase 9B (453 aa).

The residue at position 214 (Ser214) is a Phosphoserine.

It belongs to the methyltransferase superfamily.

Functionally, may modify wobble uridines in specific arginine and glutamic acid tRNAs. Acts as a tumor suppressor by promoting the expression of LIN9. In Bos taurus (Bovine), this protein is Probable tRNA methyltransferase 9B (TRMT9B).